We begin with the raw amino-acid sequence, 766 residues long: 5-methyltetrahydropteroyltriglutamate--homocysteine methyltransferase 1 (766 aa).

Residues lysine 18 and asparagine 116 each coordinate 5-methyltetrahydropteroyltri-L-glutamate. L-homocysteine is bound by residues 438–440 and glutamate 491; that span reads IGS. Residues 438–440 and glutamate 491 each bind L-methionine; that span reads IGS. Residues aspartate 496, tyrosine 519, 522–523, and tryptophan 568 each bind 5-methyltetrahydropteroyltri-L-glutamate; that span reads RC. Aspartate 606 is a binding site for L-homocysteine. Residue aspartate 606 coordinates L-methionine. 4 residues coordinate Zn(2+): histidine 648, cysteine 650, histidine 659, and glutamate 672. Histidine 702 acts as the Proton donor in catalysis. Cysteine 734 contacts Zn(2+).

This sequence belongs to the vitamin-B12 independent methionine synthase family. Requires Zn(2+) as cofactor.

The protein resides in the cytoplasm. Its subcellular location is the cytosol. It catalyses the reaction 5-methyltetrahydropteroyltri-L-glutamate + L-homocysteine = tetrahydropteroyltri-L-glutamate + L-methionine. It functions in the pathway amino-acid biosynthesis; L-methionine biosynthesis via de novo pathway; L-methionine from L-homocysteine (MetE route): step 1/1. Its function is as follows. Catalyzes the transfer of a methyl group from 5-methyltetrahydrofolate to homocysteine resulting in methionine formation. This is 5-methyltetrahydropteroyltriglutamate--homocysteine methyltransferase 1 from Oryza sativa subsp. japonica (Rice).